A 247-amino-acid polypeptide reads, in one-letter code: Carboxy-S-adenosyl-L-methionine synthase (247 aa).

S-adenosyl-L-methionine-binding positions include tyrosine 40, 65–67, 90–91, 122–123, asparagine 137, and arginine 204; these read GAS, DN, and DI.

Belongs to the class I-like SAM-binding methyltransferase superfamily. Cx-SAM synthase family. In terms of assembly, homodimer.

The enzyme catalyses prephenate + S-adenosyl-L-methionine = carboxy-S-adenosyl-L-methionine + 3-phenylpyruvate + H2O. In terms of biological role, catalyzes the conversion of S-adenosyl-L-methionine (SAM) to carboxy-S-adenosyl-L-methionine (Cx-SAM). This Pseudomonas fluorescens (strain Pf0-1) protein is Carboxy-S-adenosyl-L-methionine synthase.